A 457-amino-acid chain; its full sequence is Bifunctional protein GlmU (457 aa).

The pyrophosphorylase stretch occupies residues 1–229; it reads MDLAAVILAA…PVEVTGINDR (229 aa). UDP-N-acetyl-alpha-D-glucosamine-binding positions include 8–11, Lys-22, Gln-72, and 77–78; these read LAAG and GT. Position 102 (Asp-102) interacts with Mg(2+). Positions 139, 154, 169, and 227 each coordinate UDP-N-acetyl-alpha-D-glucosamine. Asn-227 is a Mg(2+) binding site. The segment at 230-250 is linker; that stretch reads RQLAEVEKYLRRRVLEDLMQS. Positions 251-457 are N-acetyltransferase; that stretch reads GVTVLDPAST…WAAKKRDKKV (207 aa). Arg-332 and Lys-350 together coordinate UDP-N-acetyl-alpha-D-glucosamine. His-362 acts as the Proton acceptor in catalysis. The UDP-N-acetyl-alpha-D-glucosamine site is built by Tyr-365 and Asn-376. Acetyl-CoA is bound by residues 385–386, Ser-404, Ala-422, and Arg-439; that span reads NY.

This sequence in the N-terminal section; belongs to the N-acetylglucosamine-1-phosphate uridyltransferase family. The protein in the C-terminal section; belongs to the transferase hexapeptide repeat family. In terms of assembly, homotrimer. The cofactor is Mg(2+).

It is found in the cytoplasm. The catalysed reaction is alpha-D-glucosamine 1-phosphate + acetyl-CoA = N-acetyl-alpha-D-glucosamine 1-phosphate + CoA + H(+). The enzyme catalyses N-acetyl-alpha-D-glucosamine 1-phosphate + UTP + H(+) = UDP-N-acetyl-alpha-D-glucosamine + diphosphate. Its pathway is nucleotide-sugar biosynthesis; UDP-N-acetyl-alpha-D-glucosamine biosynthesis; N-acetyl-alpha-D-glucosamine 1-phosphate from alpha-D-glucosamine 6-phosphate (route II): step 2/2. It participates in nucleotide-sugar biosynthesis; UDP-N-acetyl-alpha-D-glucosamine biosynthesis; UDP-N-acetyl-alpha-D-glucosamine from N-acetyl-alpha-D-glucosamine 1-phosphate: step 1/1. The protein operates within bacterial outer membrane biogenesis; LPS lipid A biosynthesis. Functionally, catalyzes the last two sequential reactions in the de novo biosynthetic pathway for UDP-N-acetylglucosamine (UDP-GlcNAc). The C-terminal domain catalyzes the transfer of acetyl group from acetyl coenzyme A to glucosamine-1-phosphate (GlcN-1-P) to produce N-acetylglucosamine-1-phosphate (GlcNAc-1-P), which is converted into UDP-GlcNAc by the transfer of uridine 5-monophosphate (from uridine 5-triphosphate), a reaction catalyzed by the N-terminal domain. This chain is Bifunctional protein GlmU, found in Pelotomaculum thermopropionicum (strain DSM 13744 / JCM 10971 / SI).